A 207-amino-acid polypeptide reads, in one-letter code: Thiamine-phosphate synthase (207 aa).

4-amino-2-methyl-5-(diphosphooxymethyl)pyrimidine-binding positions include 35–39 (QYRDK) and Asn-67. Residues Asp-68 and Asp-86 each contribute to the Mg(2+) site. Thr-105 is a binding site for 4-amino-2-methyl-5-(diphosphooxymethyl)pyrimidine. Position 132–134 (132–134 (SVT)) interacts with 2-[(2R,5Z)-2-carboxy-4-methylthiazol-5(2H)-ylidene]ethyl phosphate. Lys-135 provides a ligand contact to 4-amino-2-methyl-5-(diphosphooxymethyl)pyrimidine. Gly-162 provides a ligand contact to 2-[(2R,5Z)-2-carboxy-4-methylthiazol-5(2H)-ylidene]ethyl phosphate.

Belongs to the thiamine-phosphate synthase family. Mg(2+) serves as cofactor.

The catalysed reaction is 2-[(2R,5Z)-2-carboxy-4-methylthiazol-5(2H)-ylidene]ethyl phosphate + 4-amino-2-methyl-5-(diphosphooxymethyl)pyrimidine + 2 H(+) = thiamine phosphate + CO2 + diphosphate. It catalyses the reaction 2-(2-carboxy-4-methylthiazol-5-yl)ethyl phosphate + 4-amino-2-methyl-5-(diphosphooxymethyl)pyrimidine + 2 H(+) = thiamine phosphate + CO2 + diphosphate. It carries out the reaction 4-methyl-5-(2-phosphooxyethyl)-thiazole + 4-amino-2-methyl-5-(diphosphooxymethyl)pyrimidine + H(+) = thiamine phosphate + diphosphate. It functions in the pathway cofactor biosynthesis; thiamine diphosphate biosynthesis; thiamine phosphate from 4-amino-2-methyl-5-diphosphomethylpyrimidine and 4-methyl-5-(2-phosphoethyl)-thiazole: step 1/1. In terms of biological role, condenses 4-methyl-5-(beta-hydroxyethyl)thiazole monophosphate (THZ-P) and 2-methyl-4-amino-5-hydroxymethyl pyrimidine pyrophosphate (HMP-PP) to form thiamine monophosphate (TMP). This is Thiamine-phosphate synthase from Pseudomonas putida (strain GB-1).